The sequence spans 238 residues: Ribose-5-phosphate isomerase A (238 aa).

Residues 30 to 33, 87 to 90, and 100 to 103 each bind substrate; these read SGST, DGAD, and KGGG. Glu-109 functions as the Proton acceptor in the catalytic mechanism. Lys-127 is a substrate binding site.

Belongs to the ribose 5-phosphate isomerase family. As to quaternary structure, homodimer.

The enzyme catalyses aldehydo-D-ribose 5-phosphate = D-ribulose 5-phosphate. It functions in the pathway carbohydrate degradation; pentose phosphate pathway; D-ribose 5-phosphate from D-ribulose 5-phosphate (non-oxidative stage): step 1/1. Its function is as follows. Catalyzes the reversible conversion of ribose-5-phosphate to ribulose 5-phosphate. The polypeptide is Ribose-5-phosphate isomerase A (Synechococcus sp. (strain CC9311)).